Here is a 72-residue protein sequence, read N- to C-terminus: Protein RALF-like 12 (72 aa).

The first 17 residues, 1–17 (MKAWVIGLLVICAVVIA), serve as a signal peptide directing secretion. Disulfide bonds link Cys-34–Cys-43 and Cys-63–Cys-69. Positions 37–60 (PNPPPGCNPPGTEQKNPTPVNEYS) are disordered.

This sequence belongs to the plant rapid alkalinization factor (RALF) family.

It is found in the secreted. Functionally, cell signaling peptide that may regulate plant stress, growth, and development. Mediates a rapid alkalinization of extracellular space by mediating a transient increase in the cytoplasmic Ca(2+) concentration leading to a calcium-dependent signaling events through a cell surface receptor and a concomitant activation of some intracellular mitogen-activated protein kinases. The chain is Protein RALF-like 12 (RALFL12) from Arabidopsis thaliana (Mouse-ear cress).